The sequence spans 429 residues: UDP-N-acetylglucosamine 1-carboxyvinyltransferase (429 aa).

22 to 23 lines the phosphoenolpyruvate pocket; that stretch reads KN. Position 102 (R102) interacts with UDP-N-acetyl-alpha-D-glucosamine. C126 serves as the catalytic Proton donor. Residue C126 is modified to 2-(S-cysteinyl)pyruvic acid O-phosphothioketal. UDP-N-acetyl-alpha-D-glucosamine-binding positions include 131–135, D316, and I338; that span reads RPVDL.

Belongs to the EPSP synthase family. MurA subfamily.

It is found in the cytoplasm. The enzyme catalyses phosphoenolpyruvate + UDP-N-acetyl-alpha-D-glucosamine = UDP-N-acetyl-3-O-(1-carboxyvinyl)-alpha-D-glucosamine + phosphate. Its pathway is cell wall biogenesis; peptidoglycan biosynthesis. Its function is as follows. Cell wall formation. Adds enolpyruvyl to UDP-N-acetylglucosamine. The chain is UDP-N-acetylglucosamine 1-carboxyvinyltransferase from Methylobacterium radiotolerans (strain ATCC 27329 / DSM 1819 / JCM 2831 / NBRC 15690 / NCIMB 10815 / 0-1).